The chain runs to 508 residues: Chromosomal replication initiator protein DnaA (508 aa).

The interval 1-91 (MADDPGSSFT…TDALSRRLGQ (91 aa)) is domain I, interacts with DnaA modulators. The interval 91–167 (QQIQLGVRIA…AIDPAVAAGT (77 aa)) is domain II. Positions 104–152 (DDVEDALIPSAEPFPDTDADLSARRRTDSRASGERGAVTNTQPGWTNYF) are disordered. The segment covering 124–136 (LSARRRTDSRASG) has biased composition (basic and acidic residues). Polar residues predominate over residues 141-152 (VTNTQPGWTNYF). The tract at residues 168–384 (SLNRRYTFDT…GALIRVTAFA (217 aa)) is domain III, AAA+ region. The ATP site is built by glycine 212, glycine 214, lysine 215, and threonine 216. Residues 385 to 508 (SLNKTPIDKS…TTRIRQRSKR (124 aa)) form a domain IV, binds dsDNA region.

This sequence belongs to the DnaA family. As to quaternary structure, oligomerizes as a right-handed, spiral filament on DNA at oriC.

It localises to the cytoplasm. Functionally, plays an essential role in the initiation and regulation of chromosomal replication. ATP-DnaA binds to the origin of replication (oriC) to initiate formation of the DNA replication initiation complex once per cell cycle. Binds the DnaA box (a 9 base pair repeat at the origin) and separates the double-stranded (ds)DNA. Forms a right-handed helical filament on oriC DNA; dsDNA binds to the exterior of the filament while single-stranded (ss)DNA is stabiized in the filament's interior. The ATP-DnaA-oriC complex binds and stabilizes one strand of the AT-rich DNA unwinding element (DUE), permitting loading of DNA polymerase. After initiation quickly degrades to an ADP-DnaA complex that is not apt for DNA replication. Binds acidic phospholipids. In Mycobacterium avium, this protein is Chromosomal replication initiator protein DnaA.